Here is a 31-residue protein sequence, read N- to C-terminus: Cytochrome b6-f complex subunit 6 (31 aa).

Residues 4 to 26 (LTSYFGFLLAALTITSALFIGLS) form a helical membrane-spanning segment.

The protein belongs to the PetL family. The 4 large subunits of the cytochrome b6-f complex are cytochrome b6, subunit IV (17 kDa polypeptide, PetD), cytochrome f and the Rieske protein, while the 4 small subunits are PetG, PetL, PetM and PetN. The complex functions as a dimer.

It is found in the plastid. The protein localises to the chloroplast thylakoid membrane. Its function is as follows. Component of the cytochrome b6-f complex, which mediates electron transfer between photosystem II (PSII) and photosystem I (PSI), cyclic electron flow around PSI, and state transitions. PetL is important for photoautotrophic growth as well as for electron transfer efficiency and stability of the cytochrome b6-f complex. The sequence is that of Cytochrome b6-f complex subunit 6 from Aethionema cordifolium (Lebanon stonecress).